A 401-amino-acid chain; its full sequence is Coenzyme A biosynthesis bifunctional protein CoaBC (401 aa).

The phosphopantothenoylcysteine decarboxylase stretch occupies residues 1-190 (MQTLAGKKIL…FQPKPLQDKS (190 aa)). The active-site Proton donor is the cysteine 159. A phosphopantothenate--cysteine ligase region spans residues 191-401 (ILITAGPTRE…LKQIQTLMGH (211 aa)). Residues aspartate 279, lysine 289, 307-310 (PDIV), phenylalanine 326, lysine 340, and lysine 344 contribute to the CTP site.

It in the N-terminal section; belongs to the HFCD (homo-oligomeric flavin containing Cys decarboxylase) superfamily. In the C-terminal section; belongs to the PPC synthetase family. Requires Mg(2+) as cofactor. It depends on FMN as a cofactor.

It carries out the reaction N-[(R)-4-phosphopantothenoyl]-L-cysteine + H(+) = (R)-4'-phosphopantetheine + CO2. The catalysed reaction is (R)-4'-phosphopantothenate + L-cysteine + CTP = N-[(R)-4-phosphopantothenoyl]-L-cysteine + CMP + diphosphate + H(+). It functions in the pathway cofactor biosynthesis; coenzyme A biosynthesis; CoA from (R)-pantothenate: step 2/5. The protein operates within cofactor biosynthesis; coenzyme A biosynthesis; CoA from (R)-pantothenate: step 3/5. In terms of biological role, catalyzes two sequential steps in the biosynthesis of coenzyme A. In the first step cysteine is conjugated to 4'-phosphopantothenate to form 4-phosphopantothenoylcysteine. In the second step the latter compound is decarboxylated to form 4'-phosphopantotheine. This chain is Coenzyme A biosynthesis bifunctional protein CoaBC, found in Vibrio vulnificus (strain CMCP6).